The primary structure comprises 340 residues: Ferrochelatase (340 aa).

Residues His189 and Glu292 each contribute to the Fe cation site.

The protein belongs to the ferrochelatase family.

It is found in the cytoplasm. It catalyses the reaction heme b + 2 H(+) = protoporphyrin IX + Fe(2+). It participates in porphyrin-containing compound metabolism; protoheme biosynthesis; protoheme from protoporphyrin-IX: step 1/1. Its function is as follows. Catalyzes the ferrous insertion into protoporphyrin IX. The sequence is that of Ferrochelatase from Ectopseudomonas mendocina (strain ymp) (Pseudomonas mendocina).